A 202-amino-acid polypeptide reads, in one-letter code: Urease accessory protein UreG (202 aa).

10 to 17 provides a ligand contact to GTP; sequence GPVGSGKT.

The protein belongs to the SIMIBI class G3E GTPase family. UreG subfamily. Homodimer. UreD, UreF and UreG form a complex that acts as a GTP-hydrolysis-dependent molecular chaperone, activating the urease apoprotein by helping to assemble the nickel containing metallocenter of UreC. The UreE protein probably delivers the nickel.

It localises to the cytoplasm. Its function is as follows. Facilitates the functional incorporation of the urease nickel metallocenter. This process requires GTP hydrolysis, probably effectuated by UreG. The sequence is that of Urease accessory protein UreG from Synechococcus sp. (strain JA-3-3Ab) (Cyanobacteria bacterium Yellowstone A-Prime).